The chain runs to 79 residues: Small ribosomal subunit protein uS17 (79 aa).

The protein belongs to the universal ribosomal protein uS17 family. Part of the 30S ribosomal subunit.

In terms of biological role, one of the primary rRNA binding proteins, it binds specifically to the 5'-end of 16S ribosomal RNA. This chain is Small ribosomal subunit protein uS17, found in Bartonella henselae (strain ATCC 49882 / DSM 28221 / CCUG 30454 / Houston 1) (Rochalimaea henselae).